Reading from the N-terminus, the 322-residue chain is N-acetyl-gamma-glutamyl-phosphate reductase (322 aa).

C132 is a catalytic residue.

This sequence belongs to the NAGSA dehydrogenase family. Type 1 subfamily.

The protein resides in the cytoplasm. The enzyme catalyses N-acetyl-L-glutamate 5-semialdehyde + phosphate + NADP(+) = N-acetyl-L-glutamyl 5-phosphate + NADPH + H(+). Its pathway is amino-acid biosynthesis; L-arginine biosynthesis; N(2)-acetyl-L-ornithine from L-glutamate: step 3/4. Its function is as follows. Catalyzes the NADPH-dependent reduction of N-acetyl-5-glutamyl phosphate to yield N-acetyl-L-glutamate 5-semialdehyde. This is N-acetyl-gamma-glutamyl-phosphate reductase from Bacteroides fragilis (strain YCH46).